We begin with the raw amino-acid sequence, 235 residues long: Ubiquinone biosynthesis O-methyltransferase (235 aa).

S-adenosyl-L-methionine-binding residues include Arg39, Gly59, Asp80, and Met124.

It belongs to the methyltransferase superfamily. UbiG/COQ3 family.

The enzyme catalyses a 3-demethylubiquinol + S-adenosyl-L-methionine = a ubiquinol + S-adenosyl-L-homocysteine + H(+). The catalysed reaction is a 3-(all-trans-polyprenyl)benzene-1,2-diol + S-adenosyl-L-methionine = a 2-methoxy-6-(all-trans-polyprenyl)phenol + S-adenosyl-L-homocysteine + H(+). It participates in cofactor biosynthesis; ubiquinone biosynthesis. O-methyltransferase that catalyzes the 2 O-methylation steps in the ubiquinone biosynthetic pathway. This Vibrio vulnificus (strain CMCP6) protein is Ubiquinone biosynthesis O-methyltransferase.